The chain runs to 112 residues: uncharacterized protein (112 aa).

The next 2 helical transmembrane spans lie at 55–75 (LLEINLLVAATVIHLIAPTLF) and 91–111 (LIMLGLRIAVLLAKQLLLLLL).

The protein localises to the membrane. This is an uncharacterized protein from Saccharomyces cerevisiae (strain ATCC 204508 / S288c) (Baker's yeast).